Here is a 199-residue protein sequence, read N- to C-terminus: 3-isopropylmalate dehydratase small subunit (199 aa).

Belongs to the LeuD family. LeuD type 1 subfamily. As to quaternary structure, heterodimer of LeuC and LeuD.

The catalysed reaction is (2R,3S)-3-isopropylmalate = (2S)-2-isopropylmalate. It participates in amino-acid biosynthesis; L-leucine biosynthesis; L-leucine from 3-methyl-2-oxobutanoate: step 2/4. Catalyzes the isomerization between 2-isopropylmalate and 3-isopropylmalate, via the formation of 2-isopropylmaleate. The chain is 3-isopropylmalate dehydratase small subunit from Aeromonas salmonicida (strain A449).